A 338-amino-acid polypeptide reads, in one-letter code: Lipoate-protein ligase A (338 aa).

The BPL/LPL catalytic domain occupies Pro29 to Val216. Residues Arg71, Gly76–Phe79, and Lys134 each bind ATP. A (R)-lipoate-binding site is contributed by Lys134.

This sequence belongs to the LplA family. In terms of assembly, monomer.

It is found in the cytoplasm. It catalyses the reaction L-lysyl-[lipoyl-carrier protein] + (R)-lipoate + ATP = N(6)-[(R)-lipoyl]-L-lysyl-[lipoyl-carrier protein] + AMP + diphosphate + H(+). It participates in protein modification; protein lipoylation via exogenous pathway; protein N(6)-(lipoyl)lysine from lipoate: step 1/2. Its pathway is protein modification; protein lipoylation via exogenous pathway; protein N(6)-(lipoyl)lysine from lipoate: step 2/2. In terms of biological role, catalyzes both the ATP-dependent activation of exogenously supplied lipoate to lipoyl-AMP and the transfer of the activated lipoyl onto the lipoyl domains of lipoate-dependent enzymes. The sequence is that of Lipoate-protein ligase A from Escherichia coli O157:H7.